The chain runs to 85 residues: Conotoxin Lt28.7 (85 aa).

The N-terminal stretch at 1 to 21 is a signal peptide; it reads MPKLEMMLLVLLILPLCYIDA. Residues 22–40 constitute a propeptide that is removed on maturation; that stretch reads VGPPPPWNMEDEIIEHWQE.

Belongs to the conotoxin D superfamily. In terms of processing, contains 5 disulfide bonds. Expressed by the venom duct.

The protein localises to the secreted. In terms of biological role, probable neurotoxin. This is Conotoxin Lt28.7 from Conus litteratus (Lettered cone).